Reading from the N-terminus, the 301-residue chain is Bifunctional protein FolD (301 aa).

NADP(+)-binding positions include 169 to 171 (GRS), Ser194, and Ile235.

It belongs to the tetrahydrofolate dehydrogenase/cyclohydrolase family. As to quaternary structure, homodimer.

It carries out the reaction (6R)-5,10-methylene-5,6,7,8-tetrahydrofolate + NADP(+) = (6R)-5,10-methenyltetrahydrofolate + NADPH. It catalyses the reaction (6R)-5,10-methenyltetrahydrofolate + H2O = (6R)-10-formyltetrahydrofolate + H(+). The protein operates within one-carbon metabolism; tetrahydrofolate interconversion. In terms of biological role, catalyzes the oxidation of 5,10-methylenetetrahydrofolate to 5,10-methenyltetrahydrofolate and then the hydrolysis of 5,10-methenyltetrahydrofolate to 10-formyltetrahydrofolate. The protein is Bifunctional protein FolD of Gloeothece citriformis (strain PCC 7424) (Cyanothece sp. (strain PCC 7424)).